The following is a 77-amino-acid chain: U8-lycotoxin-Ls1o (77 aa).

The N-terminal stretch at 1–20 is a signal peptide; the sequence is MKLMIFTGLVLFAIVSLIEA. Positions 21–26 are excised as a propeptide; that stretch reads QAENGK.

This sequence belongs to the neurotoxin 19 (CSTX) family. 08 (U8-Lctx) subfamily. Contains 4 disulfide bonds. In terms of tissue distribution, expressed by the venom gland.

It is found in the secreted. The protein is U8-lycotoxin-Ls1o of Lycosa singoriensis (Wolf spider).